We begin with the raw amino-acid sequence, 968 residues long: Translation initiation factor IF-2 (968 aa).

Positions 51–76 are enriched in low complexity; that stretch reads PAAGASKSEAPAAAPKAPASPAATRP. Positions 51 to 369 are disordered; it reads PAAGASKSEA…GVSVPRGDGN (319 aa). Residues 77–87 show a composition bias toward pro residues; it reads APAPGPAAPKA. Low complexity predominate over residues 93-102; that stretch reads EAPAAASAPS. A compositionally biased stretch (pro residues) spans 103–112; that stretch reads APAPAAPAPA. Low complexity-rich tracts occupy residues 113–122, 128–170, and 239–254; these read APAAAASAPS, APST…GNNP, and GARP…PGAR. Residues 281 to 336 show a composition bias toward gly residues; that stretch reads GRPGGGGRGPGRPGGAPGTGGAPGAGGGAPAGGGFGKGGRGRGGTQGAFGKGGAGR. Over residues 337 to 346 the composition is skewed to basic residues; that stretch reads GKQRKSKRAK. The 172-residue stretch at 461–632 folds into the tr-type G domain; sequence ARPPVVTVMG…AVLLTADAAL (172 aa). The interval 470 to 477 is G1; it reads GHVDHGKT. Residue 470 to 477 coordinates GTP; the sequence is GHVDHGKT. Residues 495–499 form a G2 region; the sequence is GITQH. The segment at 520 to 523 is G3; it reads DTPG. GTP contacts are provided by residues 520-524 and 574-577; these read DTPGH and NKID. The tract at residues 574-577 is G4; sequence NKID. Residues 610-612 are G5; the sequence is SAR.

This sequence belongs to the TRAFAC class translation factor GTPase superfamily. Classic translation factor GTPase family. IF-2 subfamily.

It localises to the cytoplasm. In terms of biological role, one of the essential components for the initiation of protein synthesis. Protects formylmethionyl-tRNA from spontaneous hydrolysis and promotes its binding to the 30S ribosomal subunits. Also involved in the hydrolysis of GTP during the formation of the 70S ribosomal complex. The chain is Translation initiation factor IF-2 from Arthrobacter sp. (strain FB24).